Here is a 79-residue protein sequence, read N- to C-terminus: Small ribosomal subunit protein bS16c (79 aa).

The protein belongs to the bacterial ribosomal protein bS16 family.

Its subcellular location is the plastid. The protein localises to the chloroplast. The sequence is that of Small ribosomal subunit protein bS16c from Staurastrum punctulatum (Green alga).